Consider the following 157-residue polypeptide: Cyclic pyranopterin monophosphate synthase (157 aa).

Substrate contacts are provided by residues 74 to 76 and 112 to 113; these read MCH and ME. Asp127 is an active-site residue.

The protein belongs to the MoaC family. Homohexamer; trimer of dimers.

It catalyses the reaction (8S)-3',8-cyclo-7,8-dihydroguanosine 5'-triphosphate = cyclic pyranopterin phosphate + diphosphate. Its pathway is cofactor biosynthesis; molybdopterin biosynthesis. In terms of biological role, catalyzes the conversion of (8S)-3',8-cyclo-7,8-dihydroguanosine 5'-triphosphate to cyclic pyranopterin monophosphate (cPMP). This chain is Cyclic pyranopterin monophosphate synthase, found in Campylobacter jejuni subsp. doylei (strain ATCC BAA-1458 / RM4099 / 269.97).